The following is a 523-amino-acid chain: Glucose-1-phosphate adenylyltransferase large subunit 1, chloroplastic/amyloplastic (523 aa).

The N-terminal 49 residues, 1-49 (MSSMQFSSVLPLEGKACVSPVRREGSACERLKIGDSSSIRHERASRRMC), are a transit peptide targeting the chloroplast.

It belongs to the bacterial/plant glucose-1-phosphate adenylyltransferase family. In terms of assembly, heterotetramer. In terms of tissue distribution, starchy endosperm and roots.

It is found in the plastid. The protein resides in the chloroplast. Its subcellular location is the amyloplast. It catalyses the reaction alpha-D-glucose 1-phosphate + ATP + H(+) = ADP-alpha-D-glucose + diphosphate. It participates in glycan biosynthesis; starch biosynthesis. Highly active without 3'phosphoglycerate, and is only slightly affected by the activator 3'phosphoglycerate and inhibitor orthophosphate. In terms of biological role, this protein plays a role in synthesis of starch. It catalyzes the synthesis of the activated glycosyl donor, ADP-glucose from Glc-1-P and ATP. This chain is Glucose-1-phosphate adenylyltransferase large subunit 1, chloroplastic/amyloplastic, found in Hordeum vulgare (Barley).